Here is a 1568-residue protein sequence, read N- to C-terminus: Agglutinin-like protein 7 (1568 aa).

The N-terminal stretch at 1-18 (MKKLYLLYLLASFTTVIS) is a signal peptide. Intrachain disulfides connect C74/C151, C97/C113, C206/C299, and C228/C257. ALS repeat units lie at residues 403-434 (TTLT…VKIP), 441-471 (ITTQ…IKEP), 476-507 (VTTT…IKEP), and 512-543 (VTTT…IHDP). Disordered stretches follow at residues 546-662 (ESSS…SSSS), 721-743 (LSSD…FPHT), and 767-832 (VSLT…SIPT). 4 stretches are compositionally biased toward low complexity: residues 547 to 662 (SSSS…SSSS), 721 to 738 (LSSD…SPSD), 768 to 793 (SLTS…SPST), and 801 to 824 (SSSF…ILSE). N-linked (GlcNAc...) asparagine glycosylation occurs at N559. N851 carries an N-linked (GlcNAc...) asparagine glycan. 2 disordered regions span residues 860–1030 (VVSS…VASE) and 1046–1097 (EVVS…ENSD). Residues 872–904 (ESSVSVTSESSESVTSESVASESVTSESVTAVS) show a composition bias toward low complexity. Residues 909–918 (LYTTSEEVST) show a composition bias toward polar residues. A compositionally biased stretch (low complexity) spans 919–945 (SDSNSGMSSPIPSSEQRSSIPIMSSSD). Over residues 956 to 992 (GTILSEESSDSIPTTFSTRYWSPSGMSSRHYTNSTET) the composition is skewed to polar residues. N-linked (GlcNAc...) asparagine glycosylation occurs at N988. 2 stretches are compositionally biased toward low complexity: residues 993–1002 (SVSDVVSSSV) and 1009–1030 (ESSV…VASE). Positions 1046-1062 (EVVSTSDSKIVPSTSVP) are enriched in polar residues. Residues 1063-1077 (SSEQRSSIPIMSSSD) show a composition bias toward low complexity. N1188 carries N-linked (GlcNAc...) asparagine glycosylation. Disordered stretches follow at residues 1194–1220 (LGMS…EIEL) and 1271–1305 (GLSD…ESLG). Composition is skewed to polar residues over residues 1272-1286 (LSDS…SNRS) and 1294-1303 (DNTISISRES). N-linked (GlcNAc...) asparagine glycosylation is present at N1284. A lipid anchor (GPI-anchor amidated serine) is attached at S1548. A propeptide spans 1549–1568 (GSVSKYSLWMMAFYMLFGLF) (removed in mature form).

It belongs to the ALS family. In terms of processing, the GPI-anchor is attached to the protein in the endoplasmic reticulum and serves to target the protein to the cell surface. There, the glucosamine-inositol phospholipid moiety is cleaved off and the GPI-modified mannoprotein is covalently attached via its lipidless GPI glycan remnant to the 1,6-beta-glucan of the outer cell wall layer.

It is found in the cell membrane. It localises to the secreted. Its subcellular location is the cell wall. Cell surface adhesion protein which mediates both yeast-to-host tissue adherence and yeast aggregation. Plays an important role in the pathogenesis of C.albicans infections. This is Agglutinin-like protein 7 (ALS7) from Candida albicans (strain SC5314 / ATCC MYA-2876) (Yeast).